Here is a 238-residue protein sequence, read N- to C-terminus: Ribonuclease PH (238 aa).

Residues Arg86 and 124–126 (GTR) each bind phosphate.

This sequence belongs to the RNase PH family. As to quaternary structure, homohexameric ring arranged as a trimer of dimers.

It carries out the reaction tRNA(n+1) + phosphate = tRNA(n) + a ribonucleoside 5'-diphosphate. In terms of biological role, phosphorolytic 3'-5' exoribonuclease that plays an important role in tRNA 3'-end maturation. Removes nucleotide residues following the 3'-CCA terminus of tRNAs; can also add nucleotides to the ends of RNA molecules by using nucleoside diphosphates as substrates, but this may not be physiologically important. Probably plays a role in initiation of 16S rRNA degradation (leading to ribosome degradation) during starvation. The chain is Ribonuclease PH from Photobacterium profundum (strain SS9).